We begin with the raw amino-acid sequence, 217 residues long: Adenylate kinase (217 aa).

Residue 11-16 (GAGKGT) coordinates ATP. Residues 31-60 (STGDMFREAMANKTPVGLEAKSYIDKGDLV) are NMP. Residues T32, R37, 58-60 (DLV), 86-89 (GFPR), and Q93 each bind AMP. Residues 127–165 (ARFMCKNCGATYNKFSKKPKVEGTCDRCGGHEFYQREDD) form an LID region. Residue R128 coordinates ATP. 2 residues coordinate Zn(2+): C131 and C134. Residue 137–138 (TY) participates in ATP binding. Positions 151 and 154 each coordinate Zn(2+). The AMP site is built by R162 and R173. Q201 serves as a coordination point for ATP.

This sequence belongs to the adenylate kinase family. As to quaternary structure, monomer.

The protein resides in the cytoplasm. The catalysed reaction is AMP + ATP = 2 ADP. It functions in the pathway purine metabolism; AMP biosynthesis via salvage pathway; AMP from ADP: step 1/1. Catalyzes the reversible transfer of the terminal phosphate group between ATP and AMP. Plays an important role in cellular energy homeostasis and in adenine nucleotide metabolism. In Lactobacillus delbrueckii subsp. bulgaricus (strain ATCC 11842 / DSM 20081 / BCRC 10696 / JCM 1002 / NBRC 13953 / NCIMB 11778 / NCTC 12712 / WDCM 00102 / Lb 14), this protein is Adenylate kinase.